The following is a 123-amino-acid chain: Holo-[acyl-carrier-protein] synthase (123 aa).

Mg(2+)-binding residues include Asp-8 and Glu-60.

Belongs to the P-Pant transferase superfamily. AcpS family. Requires Mg(2+) as cofactor.

It is found in the cytoplasm. The catalysed reaction is apo-[ACP] + CoA = holo-[ACP] + adenosine 3',5'-bisphosphate + H(+). Its function is as follows. Transfers the 4'-phosphopantetheine moiety from coenzyme A to a Ser of acyl-carrier-protein. This chain is Holo-[acyl-carrier-protein] synthase, found in Ehrlichia ruminantium (strain Gardel).